Consider the following 402-residue polypeptide: Type II NADH:quinone oxidoreductase (402 aa).

FAD-binding positions include 12–16 (GAGYA), 39–40 (NK), and V83. E172 is an active-site residue. FAD-binding positions include D302, 319-320 (AQ), and K379.

It belongs to the NADH dehydrogenase family. FAD is required as a cofactor.

The protein localises to the cell membrane. It catalyses the reaction a quinone + NADH + H(+) = a quinol + NAD(+). Its function is as follows. Alternative, nonproton pumping NADH:quinone oxidoreductase that delivers electrons to the respiratory chain by oxidation of NADH and reduction of quinones, and contributes to the regeneration of NAD(+). This chain is Type II NADH:quinone oxidoreductase, found in Staphylococcus aureus (strain MSSA476).